A 105-amino-acid chain; its full sequence is Small ribosomal subunit protein uS10 (105 aa).

This sequence belongs to the universal ribosomal protein uS10 family. Part of the 30S ribosomal subunit.

Its function is as follows. Involved in the binding of tRNA to the ribosomes. This Thermus thermophilus (strain ATCC BAA-163 / DSM 7039 / HB27) protein is Small ribosomal subunit protein uS10.